The chain runs to 82 residues: Proline, histidine and glycine-rich protein 1 (82 aa).

Residues H20–H82 are disordered.

The chain is Proline, histidine and glycine-rich protein 1 (PHGR1) from Homo sapiens (Human).